The following is a 513-amino-acid chain: ATP synthase subunit alpha (513 aa).

169–176 (GDRQTGKT) is an ATP binding site.

Belongs to the ATPase alpha/beta chains family. F-type ATPases have 2 components, CF(1) - the catalytic core - and CF(0) - the membrane proton channel. CF(1) has five subunits: alpha(3), beta(3), gamma(1), delta(1), epsilon(1). CF(0) has three main subunits: a(1), b(2) and c(9-12). The alpha and beta chains form an alternating ring which encloses part of the gamma chain. CF(1) is attached to CF(0) by a central stalk formed by the gamma and epsilon chains, while a peripheral stalk is formed by the delta and b chains.

It is found in the cell inner membrane. The enzyme catalyses ATP + H2O + 4 H(+)(in) = ADP + phosphate + 5 H(+)(out). Functionally, produces ATP from ADP in the presence of a proton gradient across the membrane. The alpha chain is a regulatory subunit. In Actinobacillus pleuropneumoniae serotype 7 (strain AP76), this protein is ATP synthase subunit alpha.